A 351-amino-acid polypeptide reads, in one-letter code: MTKISKIIDELNNQQADAAWITTPLNVYYFTGYRSEPHERLFALLIKKDGKQVLFCPKMEVEEVKASPFTGEIVGYLDTENPFSLYPQTINKLLIESEHLTVARQKQLISGFNVNSFGDVDLTIKQLRNIKSEDEINKIRKAAELADKCIEIGVSYLKESVTEREVVNHIEQTIKQYGVNEMSFDTMVLFGDHAASPHGTPGDRRLKSNEYVLFDLGVIYEHYCSDMTRTIKFGEPSQEAQEIYNIVLEAETSAIQAIKPGIPLKDIDHIARNIISEKGYGEYFPHRLGHGLGLQEHEYQDVSSTNSNLLEAGMVITIEPGIYVPGVAGVRIEDDILVTNEGYEVLTHYEK.

The Mn(2+) site is built by Asp-215, Asp-226, His-290, Glu-319, and Glu-333.

The protein belongs to the peptidase M24B family. Mn(2+) serves as cofactor.

This is an uncharacterized protein from Staphylococcus aureus (strain MRSA252).